The following is a 402-amino-acid chain: 3-isopropylmalate dehydratase large subunit 2 (402 aa).

Cys280, Cys341, and Cys344 together coordinate [4Fe-4S] cluster.

It belongs to the aconitase/IPM isomerase family. LeuC type 2 subfamily. Heterodimer of LeuC and LeuD. The cofactor is [4Fe-4S] cluster.

The catalysed reaction is (2R,3S)-3-isopropylmalate = (2S)-2-isopropylmalate. It participates in amino-acid biosynthesis; L-leucine biosynthesis; L-leucine from 3-methyl-2-oxobutanoate: step 2/4. Functionally, catalyzes the isomerization between 2-isopropylmalate and 3-isopropylmalate, via the formation of 2-isopropylmaleate. The sequence is that of 3-isopropylmalate dehydratase large subunit 2 from Methanopyrus kandleri (strain AV19 / DSM 6324 / JCM 9639 / NBRC 100938).